The primary structure comprises 342 residues: S-adenosylmethionine:tRNA ribosyltransferase-isomerase (342 aa).

The protein belongs to the QueA family. Monomer.

It localises to the cytoplasm. The enzyme catalyses 7-aminomethyl-7-carbaguanosine(34) in tRNA + S-adenosyl-L-methionine = epoxyqueuosine(34) in tRNA + adenine + L-methionine + 2 H(+). Its pathway is tRNA modification; tRNA-queuosine biosynthesis. In terms of biological role, transfers and isomerizes the ribose moiety from AdoMet to the 7-aminomethyl group of 7-deazaguanine (preQ1-tRNA) to give epoxyqueuosine (oQ-tRNA). The chain is S-adenosylmethionine:tRNA ribosyltransferase-isomerase from Brevibacillus brevis (strain 47 / JCM 6285 / NBRC 100599).